The following is a 133-amino-acid chain: Minor spike protein H (133 aa).

The protein belongs to the microviridae H protein family.

The protein localises to the virion. Its function is as follows. Probably triggers with protein G the injection of the phage DNA into the host upon conformational changes induced by virus-host receptor interaction. The protein is Minor spike protein H of Spiroplasma virus 4 (SpV4).